The primary structure comprises 381 residues: L-lactate dehydrogenase (381 aa).

The FMN hydroxy acid dehydrogenase domain occupies 1-380 (MIISSASDYR…KPEALVDLSK (380 aa)). Substrate is bound at residue Tyr24. Ser106 and Gln127 together coordinate FMN. Residue Tyr129 participates in substrate binding. An FMN-binding site is contributed by Thr155. Arg164 contacts substrate. Lys251 provides a ligand contact to FMN. The Proton acceptor role is filled by His275. Position 278 (Arg278) interacts with substrate. 306 to 330 (DSGIRNGLDIVRMLALGADATMLGR) provides a ligand contact to FMN.

Belongs to the FMN-dependent alpha-hydroxy acid dehydrogenase family. It depends on FMN as a cofactor.

Its subcellular location is the cell inner membrane. The catalysed reaction is (S)-lactate + A = pyruvate + AH2. Functionally, catalyzes the conversion of L-lactate to pyruvate. Is coupled to the respiratory chain. This is L-lactate dehydrogenase from Haemophilus influenzae (strain 86-028NP).